The primary structure comprises 123 residues: Large ribosomal subunit protein uL14 (123 aa).

This sequence belongs to the universal ribosomal protein uL14 family. In terms of assembly, part of the 50S ribosomal subunit. Forms a cluster with proteins L3 and L19. In the 70S ribosome, L14 and L19 interact and together make contacts with the 16S rRNA in bridges B5 and B8.

In terms of biological role, binds to 23S rRNA. Forms part of two intersubunit bridges in the 70S ribosome. The chain is Large ribosomal subunit protein uL14 from Vibrio parahaemolyticus serotype O3:K6 (strain RIMD 2210633).